We begin with the raw amino-acid sequence, 1902 residues long: MNKLTEQHLLKKSRFLKYSLLASISVGAAIPFEGMAMSKEAFRIDLSNKLLNHVSQLNGYKDTTNNTPQQIGKVIVSEPKINTYTPSEIREMKISNKPKASNPLKDVPIEDHYKVVARSKSDVGTARKVRPITRCKTFAGIEKTEQSQNTYTPESTEQMPQKPEIIITASSPTVSPASNSFITAPNTPNTTLTSPEHYTTAPGTPSSTPATPYQSTSDSKPNDSLGANTPPNINTNSKAVRRLSFSSSGPQQQAVQSSSQVKSEVPPKPTFVPLPIKKSSTEIVAGMVSNISRVNEMIGIKLAEVTQAIDTTDKKDKERLQKLYTQLTSTQKTTEKLKSRAEEIETKIKIGENKDKIKKLEKELTSKNNKADRLFQKIEKIDIPANKVSIKSQETVPVTTASTEVSAFQAQQARINEARQGVFNKNKSSGGNARKSSAGTKREKKKQEAQKQLSEIKKQEKAIKTASDKAKEVAASAKKETSRTALRAMQDKMNGDSEQLNKIEENLKLLTPVVYNSSTGPTYKQSPKATPTIPLSHGVQRILGEQPEDEEGYLVPIKVQQQPYQEIEDPIPSHSKDIYEAKVSQYINYLNSIQPNQSNQAQIDSVIDGLATEMRKFSADQFSQKLGEIAHLASIKAYEGLFEKLYEIQQARILETQKVYEQAEISQSYAEYEENSRKSSIPVLSRSSSAKSVISSNFEEKSALLQTTTTDESLRSDNNWKNSAPYSSSPKLDKRGLEYLDLAGDAFVQNLKQPDTLTIETLGLITPTQNTTVAKSDSSRKNNVSGSISEIQQLQSEKMRTETLGVQDDLGLDLHYTPQETLTEKSTYLVSSKKKQGNIIKRAVSKVGSILQTNYAENRRRKRDGETSKQRTVDQEGEFGHAWGNENHKESSLSVVSGCIKKATQLISLLDAKRTAILQTTSPSQRRSVSLVLQEIENDYREAIKISQKLQQVLIRKPEDIKAYNAKAEKKLDAIKSRADKHFNNIETDVDVGFNPNGGNSHSMPTANMDILPKNLAVTPPTNVGSLYNSPQAQQFQEDHKNIIINDRSQGRLNLVDSTIVRELTDVDASIYNTAPPEVLKEAEALLDRSQGRLNLVDNTIKKGTQPLSNLSTIYESVSYENLASETIYKTEQPKPSISYTNTSKRKLPIPLFRSAELDKKLEYLDLEDKLLEVEEARIVKEKEAIAKLNQYQDPENLEFKRLAMEALDLSSKESQLKQKRKAIEAEFSLNEKSSSTDVSILRSYSIDDISGVLSDAESNLSRSPSVSGLEDLNNSNVMQLEELKSKHEKIANDYNKELELDTLNKEKIWLEGEIKHLDTEFKPKVTESKPVFSCSSSVGSINSFSNDDDLSSRDVVTPVDTLNIEINKDYVDTYIRVLSNKIQKIEEIQKIEELSGSSSRSEELNHIKEAMAYISNRIQDVEELDEKMLLAINAQLQEHDEKISSLLREEATDILAQLLLQEMLVSDGKSESTLPAGDEEQEDTEVSRQLSSLPALASSNESALALSDDREKECLALGDSSEDEESYDSGFEEEEETIGQLSDSDGDNLKITEVDTVIPLEQEAKKEMQTQISENAPTLNQAKVVNTIVNNMIRNRLDASMNMSNNMVAVGAGDEEESHIKRGLWMRGMYGTNNHGRVENMTGYRGTNKGATIGFDAEIDNNIVGIAYSNVHSVFKFKNSKNNDKELINSHVVSIYGQKELPKNFALQALVSASKNFIKDKTTYSYGDTKIKSNVKHRNHSYNAEALLHYNYLLQSKLVITPNIGLRYGKSRDGVYNETGVNVQEIALTMKENNILSGIVGTKVTVPLKDALKFNNLGLIFQGAVEHNFKEKTQRINRVVKIFDNTFKHNYLIPKQPKTSYNLGTGIIGSIKNTTISLDYNYYLNKHYRSHQGSVKLKVNL.

The N-terminal stretch at 1 to 28 (MNKLTEQHLLKKSRFLKYSLLASISVGA) is a signal peptide. 5 disordered regions span residues 140 to 273 (GIEK…TFVP), 420 to 485 (QGVF…SRTA), 707 to 729 (TTTT…YSSS), 858 to 885 (NRRR…AWGN), and 1470 to 1548 (KSES…SDGD). 2 stretches are compositionally biased toward polar residues: residues 146–159 (QSQN…TEQM) and 168–197 (TASS…SPEH). The segment covering 199–212 (TTAPGTPSSTPATP) has biased composition (low complexity). A compositionally biased stretch (polar residues) spans 225 to 238 (LGANTPPNINTNSK). A compositionally biased stretch (low complexity) spans 246–264 (SSSGPQQQAVQSSSQVKSE). Residues 423–439 (FNKNKSSGGNARKSSAG) show a composition bias toward polar residues. Residues 445 to 482 (KKQEAQKQLSEIKKQEKAIKTASDKAKEVAASAKKETS) show a composition bias toward basic and acidic residues. The segment covering 863–874 (RDGETSKQRTVD) has biased composition (basic and acidic residues). A compositionally biased stretch (low complexity) spans 1491–1507 (LSSLPALASSNESALAL). Positions 1521–1538 (SSEDEESYDSGFEEEEET) are enriched in acidic residues. The 285-residue stretch at 1618 to 1902 (ESHIKRGLWM…QGSVKLKVNL (285 aa)) folds into the Autotransporter domain.

It localises to the cell outer membrane. The polypeptide is Putative surface cell antigen sca1 (sca1) (Rickettsia conorii (strain ATCC VR-613 / Malish 7)).